The primary structure comprises 527 residues: Bifunctional purine biosynthesis protein PurH (527 aa).

The 149-residue stretch at methionine 1 to threonine 149 folds into the MGS-like domain.

The protein belongs to the PurH family.

The catalysed reaction is (6R)-10-formyltetrahydrofolate + 5-amino-1-(5-phospho-beta-D-ribosyl)imidazole-4-carboxamide = 5-formamido-1-(5-phospho-D-ribosyl)imidazole-4-carboxamide + (6S)-5,6,7,8-tetrahydrofolate. The enzyme catalyses IMP + H2O = 5-formamido-1-(5-phospho-D-ribosyl)imidazole-4-carboxamide. It participates in purine metabolism; IMP biosynthesis via de novo pathway; 5-formamido-1-(5-phospho-D-ribosyl)imidazole-4-carboxamide from 5-amino-1-(5-phospho-D-ribosyl)imidazole-4-carboxamide (10-formyl THF route): step 1/1. Its pathway is purine metabolism; IMP biosynthesis via de novo pathway; IMP from 5-formamido-1-(5-phospho-D-ribosyl)imidazole-4-carboxamide: step 1/1. The chain is Bifunctional purine biosynthesis protein PurH from Xanthomonas oryzae pv. oryzae (strain KACC10331 / KXO85).